The sequence spans 351 residues: MSVDLFPNDRFGAEDKYDNFKDAVKECSWLIEEIVKPQLPNIIDNFSKCLEMLESDQIFKMPVSNGIPNESNKQNDSPTVKGVITRQGQYIVDFHIVVRFPQFQRGKQVMFRMNTGLNFLLIQFSKIMTHLKNILEILNQLQVATDVSEFVSKFGVAMELLNHSLILLQNPPRDLVFPEDNNFAMKEMFQDCYSVCESTAHILGLELTLCRNELCIELRNLIKVTKKPWCEIDSKTGRSFCDQIRNQVTNERNKTLSKILSENGVQVQDSTLLNHIISSFQSEAITLPEAQELLRRGVTFDNRVVMECEKLIVSTSDPTLISISAKLNSLKASMANHQANLVASKQLSTYK.

As to quaternary structure, component of the RAVE complex composed of RAV1, RAV2 and CBF3D/SKP1. Within the complex, it interacts directly with RAV1 and CBF3D. Interacts with the V-ATPase V1 subunits VMA1, VMA2 and VMA8.

It is found in the cytoplasm. It localises to the early endosome membrane. Its function is as follows. Component of the RAVE complex, which is required for stable assembly of the vacuolar ATPase complex V-ATPase under many conditions. May be required for transport between the early endosome and the late endosome/prevacuolar compartment (PVC). In Saccharomyces cerevisiae (strain ATCC 204508 / S288c) (Baker's yeast), this protein is Regulator of V-ATPase in vacuolar membrane protein 2 (RAV2).